Consider the following 154-residue polypeptide: Interleukin-2 (154 aa).

The first 20 residues, 1–20, serve as a signal peptide directing secretion; the sequence is MYRMQLLSCIALSLALVTNS. Thr-23 carries an O-linked (GalNAc...) threonine glycan. Cysteines 78 and 126 form a disulfide.

This sequence belongs to the IL-2 family.

Its subcellular location is the secreted. Its function is as follows. Cytokine produced by activated CD4-positive helper T-cells and to a lesser extend activated CD8-positive T-cells and natural killer (NK) cells that plays pivotal roles in the immune response and tolerance. Binds to a receptor complex composed of either the high-affinity trimeric IL-2R (IL2RA/CD25, IL2RB/CD122 and IL2RG/CD132) or the low-affinity dimeric IL-2R (IL2RB and IL2RG). Interaction with the receptor leads to oligomerization and conformation changes in the IL-2R subunits resulting in downstream signaling starting with phosphorylation of JAK1 and JAK3. In turn, JAK1 and JAK3 phosphorylate the receptor to form a docking site leading to the phosphorylation of several substrates including STAT5. This process leads to activation of several pathways including STAT, phosphoinositide-3-kinase/PI3K and mitogen-activated protein kinase/MAPK pathways. Functions as a T-cell growth factor and can increase NK-cell cytolytic activity as well. Promotes strong proliferation of activated B-cells and subsequently immunoglobulin production. Plays a pivotal role in regulating the adaptive immune system by controlling the survival and proliferation of regulatory T-cells, which are required for the maintenance of immune tolerance. Moreover, participates in the differentiation and homeostasis of effector T-cell subsets, including Th1, Th2, Th17 as well as memory CD8-positive T-cells. In Macaca mulatta (Rhesus macaque), this protein is Interleukin-2 (IL2).